A 317-amino-acid polypeptide reads, in one-letter code: Transaldolase 2 (317 aa).

Catalysis depends on K132, which acts as the Schiff-base intermediate with substrate.

This sequence belongs to the transaldolase family. Type 1 subfamily. As to quaternary structure, homodimer.

The protein resides in the cytoplasm. The enzyme catalyses D-sedoheptulose 7-phosphate + D-glyceraldehyde 3-phosphate = D-erythrose 4-phosphate + beta-D-fructose 6-phosphate. Its pathway is carbohydrate degradation; pentose phosphate pathway; D-glyceraldehyde 3-phosphate and beta-D-fructose 6-phosphate from D-ribose 5-phosphate and D-xylulose 5-phosphate (non-oxidative stage): step 2/3. Transaldolase is important for the balance of metabolites in the pentose-phosphate pathway. This chain is Transaldolase 2, found in Pectobacterium atrosepticum (strain SCRI 1043 / ATCC BAA-672) (Erwinia carotovora subsp. atroseptica).